Here is a 388-residue protein sequence, read N- to C-terminus: Processive diacylglycerol beta-glucosyltransferase (388 aa).

This sequence belongs to the glycosyltransferase 28 family. UgtP subfamily.

It is found in the cell membrane. The catalysed reaction is a 1,2-diacyl-3-O-(beta-D-glucopyranosyl)-sn-glycerol + UDP-alpha-D-glucose = a 1,2-diacyl-3-O-(beta-D-Glc-(1-&gt;6)-beta-D-Glc)-sn-glycerol + UDP + H(+). It catalyses the reaction a 1,2-diacyl-3-O-(beta-D-Glc-(1-&gt;6)-beta-D-Glc)-sn-glycerol + UDP-alpha-D-glucose = a 1,2-diacyl-3-O-(beta-D-Glc-(1-&gt;6)-beta-D-Glc-(1-&gt;6)-beta-D-Glc)-sn-glycerol + UDP + H(+). It carries out the reaction a 1,2-diacyl-sn-glycerol + UDP-alpha-D-glucose = a 1,2-diacyl-3-O-(beta-D-glucopyranosyl)-sn-glycerol + UDP + H(+). The protein operates within glycolipid metabolism; diglucosyl-diacylglycerol biosynthesis. Functionally, processive glucosyltransferase involved in the biosynthesis of both the bilayer- and non-bilayer-forming membrane glucolipids. Is able to successively transfer up to three glucosyl residues to diacylglycerol (DAG), thereby catalyzing the formation of beta-monoglucosyl-DAG (3-O-(beta-D-glucopyranosyl)-1,2-diacyl-sn-glycerol), beta-diglucosyl-DAG (3-O-(beta-D-glucopyranosyl-beta-(1-&gt;6)-D-glucopyranosyl)-1,2-diacyl-sn-glycerol) and beta-triglucosyl-DAG (3-O-(beta-D-glucopyranosyl-beta-(1-&gt;6)-D-glucopyranosyl-beta-(1-&gt;6)-D-glucopyranosyl)-1,2-diacyl-sn-glycerol). Beta-diglucosyl-DAG is the predominant glycolipid found in Bacillales and is also used as a membrane anchor for lipoteichoic acid (LTA). The protein is Processive diacylglycerol beta-glucosyltransferase of Bacillus cereus (strain AH187).